The following is a 326-amino-acid chain: Beta-ketoacyl-[acyl-carrier-protein] synthase III (326 aa).

Residues Cys-120 and His-253 contribute to the active site. An ACP-binding region spans residues Gln-254–Arg-258. Asn-283 is an active-site residue.

This sequence belongs to the thiolase-like superfamily. FabH family. As to quaternary structure, homodimer.

It is found in the cytoplasm. It carries out the reaction malonyl-[ACP] + acetyl-CoA + H(+) = 3-oxobutanoyl-[ACP] + CO2 + CoA. It participates in lipid metabolism; fatty acid biosynthesis. Its function is as follows. Catalyzes the condensation reaction of fatty acid synthesis by the addition to an acyl acceptor of two carbons from malonyl-ACP. Catalyzes the first condensation reaction which initiates fatty acid synthesis and may therefore play a role in governing the total rate of fatty acid production. Possesses both acetoacetyl-ACP synthase and acetyl transacylase activities. Its substrate specificity determines the biosynthesis of branched-chain and/or straight-chain of fatty acids. This chain is Beta-ketoacyl-[acyl-carrier-protein] synthase III, found in Cupriavidus taiwanensis (strain DSM 17343 / BCRC 17206 / CCUG 44338 / CIP 107171 / LMG 19424 / R1) (Ralstonia taiwanensis (strain LMG 19424)).